The primary structure comprises 409 residues: Nucleoprotein (409 aa).

4 disordered regions span residues 1-32, 44-63, 120-145, and 164-193; these read MASG…SSGN, LNSP…ENLK, GADT…LRFS, and RSGR…SGAE. Positions 15-31 are enriched in low complexity; the sequence is PVIKLGGPKPPKVGSSG. The segment at 29-160 is RNA-binding; the sequence is SSGNASWFQA…GNFRWDFIPI (132 aa). Residues 31–156 form the CoV N NTD domain; that stretch reads GNASWFQALK…GGPDGNFRWD (126 aa). Low complexity predominate over residues 164-179; that stretch reads RSGRSTAASSAASSRA. Residues 180-192 are compositionally biased toward basic and acidic residues; the sequence is PSRDGSRGRRSGA. Ser190 is subject to Phosphoserine; by host. A CoV N CTD domain is found at 215–331; that stretch reads TKAKADEMAH…QCVDGVGTRP (117 aa). Residues 226–333 form a dimerization region; it reads RYCKRTIPPG…VDGVGTRPKD (108 aa). Cys320 and Cys323 are oxidised to a cystine. A disordered region spans residues 327-409; that stretch reads VGTRPKDDEP…GESALGENEL (83 aa). The span at 341–355 shows a compositional bias: polar residues; the sequence is RPNSRPATRTSSPAP. Positions 368–384 are enriched in basic and acidic residues; that stretch reads KQDDEVDKALTSDEERN. Thr378 is modified (phosphothreonine; by host). Ser379 is subject to Phosphoserine; by host.

This sequence belongs to the gammacoronavirus nucleocapsid protein family. Homooligomer. Both monomeric and oligomeric forms interact with RNA. Interacts with protein M. Interacts with NSP3; this interaction serves to tether the genome to the newly translated replicase-transcriptase complex at a very early stage of infection. ADP-ribosylated. The ADP-ribosylation is retained in the virion during infection. In terms of processing, phosphorylated on serine and threonine residues.

The protein localises to the virion. It localises to the host endoplasmic reticulum-Golgi intermediate compartment. Its subcellular location is the host Golgi apparatus. In terms of biological role, packages the positive strand viral genome RNA into a helical ribonucleocapsid (RNP) and plays a fundamental role during virion assembly through its interactions with the viral genome and membrane protein M. Plays an important role in enhancing the efficiency of subgenomic viral RNA transcription as well as viral replication. This chain is Nucleoprotein, found in Avian infectious bronchitis virus (strain D1466) (IBV).